The primary structure comprises 151 residues: Large ribosomal subunit protein bL9 (151 aa).

Belongs to the bacterial ribosomal protein bL9 family.

Binds to the 23S rRNA. This Lactobacillus johnsonii (strain CNCM I-12250 / La1 / NCC 533) protein is Large ribosomal subunit protein bL9.